Here is a 150-residue protein sequence, read N- to C-terminus: SsrA-binding protein (150 aa).

This sequence belongs to the SmpB family.

The protein localises to the cytoplasm. Functionally, required for rescue of stalled ribosomes mediated by trans-translation. Binds to transfer-messenger RNA (tmRNA), required for stable association of tmRNA with ribosomes. tmRNA and SmpB together mimic tRNA shape, replacing the anticodon stem-loop with SmpB. tmRNA is encoded by the ssrA gene; the 2 termini fold to resemble tRNA(Ala) and it encodes a 'tag peptide', a short internal open reading frame. During trans-translation Ala-aminoacylated tmRNA acts like a tRNA, entering the A-site of stalled ribosomes, displacing the stalled mRNA. The ribosome then switches to translate the ORF on the tmRNA; the nascent peptide is terminated with the 'tag peptide' encoded by the tmRNA and targeted for degradation. The ribosome is freed to recommence translation, which seems to be the essential function of trans-translation. This chain is SsrA-binding protein, found in Borrelia garinii subsp. bavariensis (strain ATCC BAA-2496 / DSM 23469 / PBi) (Borreliella bavariensis).